Consider the following 976-residue polypeptide: DNA-directed RNA polymerase 1, mitochondrial (976 aa).

Residues 1–42 constitute a mitochondrion transit peptide; that stretch reads MWRNILGRASLRKVKFLSDSSSSGTHYPVNRVRGILSSVNLS. Residues D677, K752, and D909 contribute to the active site.

The protein belongs to the phage and mitochondrial RNA polymerase family.

The protein resides in the mitochondrion. The enzyme catalyses RNA(n) + a ribonucleoside 5'-triphosphate = RNA(n+1) + diphosphate. Functionally, DNA-dependent RNA polymerase catalyzes the transcription of DNA into RNA using the four ribonucleoside triphosphates as substrates. The sequence is that of DNA-directed RNA polymerase 1, mitochondrial (RPOT1) from Arabidopsis thaliana (Mouse-ear cress).